Consider the following 356-residue polypeptide: MANIDINKLKAIENAMGQIEKQFGKGSVMKLGENSVLNIDAISTGCLDLDIALGIGGVPKGRIVEIYGPESSGKTTIALHIAAEAQKKGGAVGFIDAEHALDPSYARNLGVDTENLIVSQPDTGEQGLEIAEALVRSGAIDVIIVDSVAALVPKAEIEGEMGDSHIGLQARLMSQALRKLAGTISKTNCIAIFINQLREKVGVMFGSPETTTGGRALKFYASVRLDVRRIDSIKQGDGIVGNRTRIKVTKNKVAPPFKQAEFDIMYNEGISRQGNIVDVGVKEEIVQKSGAWFSYGDIRLGQGRENAKQYLKENPEVALDIENQIREKHNLPLMDAVIKETAQEVNGKENKEQSDK.

68 to 75 serves as a coordination point for ATP; it reads GPESSGKT.

It belongs to the RecA family.

It localises to the cytoplasm. Functionally, can catalyze the hydrolysis of ATP in the presence of single-stranded DNA, the ATP-dependent uptake of single-stranded DNA by duplex DNA, and the ATP-dependent hybridization of homologous single-stranded DNAs. It interacts with LexA causing its activation and leading to its autocatalytic cleavage. The sequence is that of Protein RecA from Clostridium botulinum (strain Eklund 17B / Type B).